The sequence spans 841 residues: Translation initiation factor IF-2 (841 aa).

A disordered region spans residues 94-258; the sequence is QRSPEEIEAE…HGFQSPTGPV (165 aa). The segment covering 96–136 has biased composition (basic and acidic residues); that stretch reads SPEEIEAERKRELEERRAVENAARQKAEEEAKRRAEEEARR. A compositionally biased stretch (low complexity) spans 137 to 173; it reads QPAAAQPAGTEAVAAPVAPVEAVREAAPVAAAPAPAA. Basic and acidic residues-rich tracts occupy residues 174–194, 200–217, and 225–234; these read DARK…DNNR, DGER…EKAP, and TTDEESDGFR. Over residues 235–248 the composition is skewed to basic residues; that stretch reads RGGRGKAKLKKRNA. A tr-type G domain is found at 341 to 510; it reads SRAPVVTVMG…LLQAEVLELK (170 aa). A G1 region spans residues 350–357; sequence GHVDHGKT. 350 to 357 is a GTP binding site; it reads GHVDHGKT. The G2 stretch occupies residues 375–379; it reads GITQH. Residues 396–399 are G3; the sequence is DTPG. Residues 396–400 and 450–453 each bind GTP; these read DTPGH and NKID. The G4 stretch occupies residues 450–453; it reads NKID. A G5 region spans residues 486–488; the sequence is SAK.

It belongs to the TRAFAC class translation factor GTPase superfamily. Classic translation factor GTPase family. IF-2 subfamily.

It is found in the cytoplasm. Its function is as follows. One of the essential components for the initiation of protein synthesis. Protects formylmethionyl-tRNA from spontaneous hydrolysis and promotes its binding to the 30S ribosomal subunits. Also involved in the hydrolysis of GTP during the formation of the 70S ribosomal complex. The chain is Translation initiation factor IF-2 from Pseudomonas fluorescens (strain SBW25).